Reading from the N-terminus, the 1193-residue chain is Structural maintenance of chromosomes protein 3 homolog (1193 aa).

Residue glycine 31–serine 38 coordinates ATP. Lysine 101 carries the N6-acetyllysine modification. Coiled-coil stretches lie at residues serine 179 to threonine 286 and isoleucine 332 to lysine 483. One can recognise an SMC hinge domain in the interval glutamate 505 to tyrosine 631. A coiled-coil region spans residues threonine 665–glutamine 993.

Belongs to the SMC family. SMC3 subfamily. In terms of assembly, component of the cohesin complex. Post-translationally, acetylation at Lys-101 by ESCO1 is important for genome stability and S phase sister chromatid cohesion.

The protein resides in the nucleus. Central component of cohesin, a complex required for chromosome cohesion during the cell cycle. The cohesin complex may form a large proteinaceous ring within which sister chromatids can be trapped. At anaphase, the complex is cleaved and dissociates from chromatin, allowing sister chromatids to segregate. Cohesion is coupled to DNA replication and is involved in DNA repair. The cohesin complex also plays an important role in spindle pole assembly during mitosis and in chromosomes movement. This chain is Structural maintenance of chromosomes protein 3 homolog, found in Plasmodium falciparum (isolate 3D7).